The chain runs to 352 residues: Protein RecA (352 aa).

ATP is bound at residue 65–72; it reads GPESSGKT. The disordered stretch occupies residues 332–352; sequence EEVEKADVKKDAKKDAAEALK. Residues 333–352 show a composition bias toward basic and acidic residues; the sequence is EVEKADVKKDAKKDAAEALK.

The protein belongs to the RecA family.

Its subcellular location is the cytoplasm. In terms of biological role, can catalyze the hydrolysis of ATP in the presence of single-stranded DNA, the ATP-dependent uptake of single-stranded DNA by duplex DNA, and the ATP-dependent hybridization of homologous single-stranded DNAs. It interacts with LexA causing its activation and leading to its autocatalytic cleavage. This Photobacterium profundum (strain SS9) protein is Protein RecA.